The chain runs to 432 residues: Trigger factor (432 aa).

One can recognise a PPIase FKBP-type domain in the interval 161–246 (GKRVSIDFVG…VNKVEARQLP (86 aa)).

This sequence belongs to the FKBP-type PPIase family. Tig subfamily.

Its subcellular location is the cytoplasm. It catalyses the reaction [protein]-peptidylproline (omega=180) = [protein]-peptidylproline (omega=0). In terms of biological role, involved in protein export. Acts as a chaperone by maintaining the newly synthesized protein in an open conformation. Functions as a peptidyl-prolyl cis-trans isomerase. The protein is Trigger factor of Vibrio vulnificus (strain YJ016).